We begin with the raw amino-acid sequence, 375 residues long: Anhydro-N-acetylmuramic acid kinase 1 (375 aa).

20-27 (GTSFDGVD) lines the ATP pocket. The segment at 351–375 (APSTTGVAAPVGGGRRSKPGARELS) is disordered.

This sequence belongs to the anhydro-N-acetylmuramic acid kinase family.

It catalyses the reaction 1,6-anhydro-N-acetyl-beta-muramate + ATP + H2O = N-acetyl-D-muramate 6-phosphate + ADP + H(+). Its pathway is amino-sugar metabolism; 1,6-anhydro-N-acetylmuramate degradation. The protein operates within cell wall biogenesis; peptidoglycan recycling. In terms of biological role, catalyzes the specific phosphorylation of 1,6-anhydro-N-acetylmuramic acid (anhMurNAc) with the simultaneous cleavage of the 1,6-anhydro ring, generating MurNAc-6-P. Is required for the utilization of anhMurNAc either imported from the medium or derived from its own cell wall murein, and thus plays a role in cell wall recycling. The sequence is that of Anhydro-N-acetylmuramic acid kinase 1 from Jannaschia sp. (strain CCS1).